Here is a 211-residue protein sequence, read N- to C-terminus: Ras-related protein Rab-38 (211 aa).

GTP-binding residues include glycine 19, valine 20, glycine 21, lysine 22, threonine 23, serine 24, serine 35, serine 36, tyrosine 38, and threonine 41. Threonine 23 contributes to the Mg(2+) binding site. The short motif at 32–46 is the Switch 1 element; sequence QNFSSHYRATIGVDF. Mg(2+) is bound by residues threonine 41 and aspartate 65. The GTP site is built by glycine 68, lysine 128, aspartate 130, alanine 160, and lysine 161. The Switch 2 motif lies at 68 to 81; that stretch reads GQERFGNMTRVYYR. A lipid anchor (S-palmitoyl cysteine) is attached at cysteine 205. Residue cysteine 208 is the site of S-geranylgeranyl cysteine attachment.

This sequence belongs to the small GTPase superfamily. Rab family. As to quaternary structure, interacts with ANKRD27. Requires Mg(2+) as cofactor. Although at least one in vitro system can process and methylate the prenylated C-terminal, in an in vitro system that normally express Rab-38 and in vivo the prenylated C-terminal is not proteolytically processed and not methylated. In terms of tissue distribution, expressed in melanocytes.

It localises to the cell membrane. It is found in the melanosome. The protein resides in the cytoplasmic vesicle. The protein localises to the phagosome. Its subcellular location is the phagosome membrane. It localises to the melanosome membrane. The catalysed reaction is GTP + H2O = GDP + phosphate + H(+). Its activity is regulated as follows. Regulated by guanine nucleotide exchange factors (GEFs) including the BLOC-3 complex composed of HPS1 and HPS4 which promote the exchange of bound GDP for free GTP. Regulated by GTPase activating proteins (GAPs) including SGSM2 which increase the GTP hydrolysis activity. Inhibited by GDP dissociation inhibitors (GDIs). Its function is as follows. The small GTPases Rab are key regulators of intracellular membrane trafficking, from the formation of transport vesicles to their fusion with membranes. Rabs cycle between an inactive GDP-bound form and an active GTP-bound form that is able to recruit to membranes different sets of downstream effectors directly responsible for vesicle formation, movement, tethering and fusion. RAB38 may be involved in melanosomal transport and docking. Involved in the proper sorting of TYRP1. Involved in peripheral melanosomal distribution of TYRP1 in melanocytes; the function, which probably is implicating vesicle-trafficking, includes cooperation with ANKRD27 and VAMP7. Plays a role in the maturation of phagosomes that engulf pathogens, such as S.aureus and M.tuberculosis. Plays an important role in the control of melanin production and melanosome biogenesis. In concert with RAB32, regulates the proper trafficking of melanogenic enzymes TYR, TYRP1 and DCT/TYRP2 to melanosomes in melanocytes. The polypeptide is Ras-related protein Rab-38 (Homo sapiens (Human)).